We begin with the raw amino-acid sequence, 251 residues long: Insulin-induced gene 1 protein (251 aa).

At 1 to 58 (MPRLEEHCWSCSCSTSVKTKDLSSAGWIVCKTGEMMSIITSVLSHAYGSLHSLQSANL) the chain is on the cytoplasmic side. Residues 59 to 81 (IRRGLVLFIVGVVLALVLNLLQI) traverse the membrane as a helical segment. Residues 82-100 (QRNVTLFPEEVLDTLFSSA) lie on the Extracellular side of the membrane. Residues 101–118 (WWIPLCCGTAAAVVGLLY) traverse the membrane as a helical segment. Over 119–133 (PCLDHHLGEPHKFKR) the chain is Cytoplasmic. Residues 134 to 156 (EWASVMRCIAVFVGINHASAKLD) traverse the membrane as a helical segment. The Extracellular segment spans residues 157-159 (FAN). The helical transmembrane segment at 160–178 (NVQLSLTLAALSLGLWWTF) threads the bilayer. Residues 179-183 (DRSRS) lie on the Cytoplasmic side of the membrane. Residues 184–205 (GFGLGLTTALLATLIAQLLVYN) form a helical membrane-spanning segment. Residues 206-219 (GIYQYTSPDFLYVR) lie on the Extracellular side of the membrane. The helical transmembrane segment at 220-237 (SWLPCIFFSGGVTVGNIG) threads the bilayer. Topologically, residues 238–251 (RQLAMGSTEKIHND) are cytoplasmic. A KxHxx motif is present at residues 245 to 251 (TEKIHND).

It belongs to the INSIG family. In terms of assembly, interacts with scap; interaction is direct and only takes place in the presence of sterols; it prevents interaction between scap and the coat protein complex II (COPII). Associates with the SCAP-SREBP complex; association is mediated via its interaction with scap and only takes place in the presence of sterols.

It localises to the endoplasmic reticulum membrane. In terms of biological role, oxysterol-binding protein that mediates feedback control of cholesterol synthesis by controlling both endoplasmic reticulum to Golgi transport of scap and degradation of hmgcr. Acts as a negative regulator of cholesterol biosynthesis by mediating the retention of the SCAP-SREBP complex in the endoplasmic reticulum, thereby blocking the processing of sterol regulatory element-binding proteins (SREBPs). Binds oxysterol, including 25-hydroxycholesterol, regulating interaction with scap and retention of the SCAP-SREBP complex in the endoplasmic reticulum. In presence of oxysterol, interacts with scap, retaining the SCAP-SREBP complex in the endoplasmic reticulum, thereby preventing scap from escorting SREBPs to the Golgi. Sterol deprivation reduces oxysterol-binding, disrupting the interaction between insig1 and scap, thereby promoting Golgi transport of the SCAP-SREBP complex, followed by processing and nuclear translocation of SREBPs. Also regulates cholesterol synthesis by regulating degradation of hmgcr. The sequence is that of Insulin-induced gene 1 protein from Danio rerio (Zebrafish).